The chain runs to 107 residues: Small ribosomal subunit protein bS18 (107 aa).

This sequence belongs to the bacterial ribosomal protein bS18 family. As to quaternary structure, part of the 30S ribosomal subunit. Forms a tight heterodimer with protein bS6.

Its function is as follows. Binds as a heterodimer with protein bS6 to the central domain of the 16S rRNA, where it helps stabilize the platform of the 30S subunit. The chain is Small ribosomal subunit protein bS18 from Mycoplasmopsis agalactiae (strain NCTC 10123 / CIP 59.7 / PG2) (Mycoplasma agalactiae).